The sequence spans 291 residues: Formamidopyrimidine-DNA glycosylase (291 aa).

Proline 2 (schiff-base intermediate with DNA) is an active-site residue. The active-site Proton donor is glutamate 3. Lysine 58 (proton donor; for beta-elimination activity) is an active-site residue. The DNA site is built by histidine 100, arginine 123, and lysine 166. The FPG-type zinc-finger motif lies at 257-291; the sequence is SVYGREGKECFQCGIPITRISQSGRSSFYCSQCQK. The Proton donor; for delta-elimination activity role is filled by arginine 281.

Belongs to the FPG family. As to quaternary structure, monomer. Requires Zn(2+) as cofactor.

It catalyses the reaction Hydrolysis of DNA containing ring-opened 7-methylguanine residues, releasing 2,6-diamino-4-hydroxy-5-(N-methyl)formamidopyrimidine.. The enzyme catalyses 2'-deoxyribonucleotide-(2'-deoxyribose 5'-phosphate)-2'-deoxyribonucleotide-DNA = a 3'-end 2'-deoxyribonucleotide-(2,3-dehydro-2,3-deoxyribose 5'-phosphate)-DNA + a 5'-end 5'-phospho-2'-deoxyribonucleoside-DNA + H(+). Involved in base excision repair of DNA damaged by oxidation or by mutagenic agents. Acts as a DNA glycosylase that recognizes and removes damaged bases. Has a preference for oxidized purines, such as 7,8-dihydro-8-oxoguanine (8-oxoG). Has AP (apurinic/apyrimidinic) lyase activity and introduces nicks in the DNA strand. Cleaves the DNA backbone by beta-delta elimination to generate a single-strand break at the site of the removed base with both 3'- and 5'-phosphates. The sequence is that of Formamidopyrimidine-DNA glycosylase from Bartonella quintana (strain Toulouse) (Rochalimaea quintana).